A 704-amino-acid polypeptide reads, in one-letter code: Elongation factor G (704 aa).

Residues 8–290 (ARYRNIGISA…AVIDYLPSPV (283 aa)) enclose the tr-type G domain. GTP is bound by residues 17–24 (AHIDAGKT), 88–92 (DTPGH), and 142–145 (NKMD). N6-acetyllysine is present on residues lysine 504 and lysine 643.

The protein belongs to the TRAFAC class translation factor GTPase superfamily. Classic translation factor GTPase family. EF-G/EF-2 subfamily.

The protein resides in the cytoplasm. In terms of biological role, catalyzes the GTP-dependent ribosomal translocation step during translation elongation. During this step, the ribosome changes from the pre-translocational (PRE) to the post-translocational (POST) state as the newly formed A-site-bound peptidyl-tRNA and P-site-bound deacylated tRNA move to the P and E sites, respectively. Catalyzes the coordinated movement of the two tRNA molecules, the mRNA and conformational changes in the ribosome. The chain is Elongation factor G from Escherichia coli O17:K52:H18 (strain UMN026 / ExPEC).